The primary structure comprises 179 residues: Large ribosomal subunit protein uL6 (179 aa).

Belongs to the universal ribosomal protein uL6 family. In terms of assembly, part of the 50S ribosomal subunit.

This protein binds to the 23S rRNA, and is important in its secondary structure. It is located near the subunit interface in the base of the L7/L12 stalk, and near the tRNA binding site of the peptidyltransferase center. This chain is Large ribosomal subunit protein uL6, found in Rhodococcus opacus (strain B4).